Reading from the N-terminus, the 296-residue chain is Cytidine deaminase (296 aa).

CMP/dCMP-type deaminase domains are found at residues 47–167 and 186–296; these read TEAE…FGPK and DSSD…VDPV. Position 88 to 90 (88 to 90) interacts with substrate; the sequence is NLE. His101 contacts Zn(2+). The Proton donor role is filled by Glu103. Zn(2+) is bound by residues Cys128 and Cys131.

The protein belongs to the cytidine and deoxycytidylate deaminase family. Homodimer. It depends on Zn(2+) as a cofactor.

It catalyses the reaction cytidine + H2O + H(+) = uridine + NH4(+). The catalysed reaction is 2'-deoxycytidine + H2O + H(+) = 2'-deoxyuridine + NH4(+). In terms of biological role, this enzyme scavenges exogenous and endogenous cytidine and 2'-deoxycytidine for UMP synthesis. This Shewanella sp. (strain ANA-3) protein is Cytidine deaminase.